Consider the following 353-residue polypeptide: Photosystem II D2 protein (353 aa).

N-acetylthreonine is present on Thr-2. A Phosphothreonine modification is found at Thr-2. Residues 41–61 (CAYFAIGGWFTGTTFVTSWYT) traverse the membrane as a helical segment. A chlorophyll a-binding site is contributed by His-118. Residues 125–141 (GFMLRQFELARSVQLRP) traverse the membrane as a helical segment. Pheophytin a is bound by residues Gln-130 and Asn-143. Residues 153–166 (VFVSVFLIYPLGQS) form a helical membrane-spanning segment. A chlorophyll a-binding site is contributed by His-198. A helical transmembrane segment spans residues 208-228 (AALLCAIHGATVENTLFEDGD). A plastoquinone is bound by residues His-215 and Phe-262. A Fe cation-binding site is contributed by His-215. His-269 provides a ligand contact to Fe cation. Residues 279–295 (GLWMSALGVVGLALNLR) traverse the membrane as a helical segment.

This sequence belongs to the reaction center PufL/M/PsbA/D family. As to quaternary structure, PSII is composed of 1 copy each of membrane proteins PsbA, PsbB, PsbC, PsbD, PsbE, PsbF, PsbH, PsbI, PsbJ, PsbK, PsbL, PsbM, PsbT, PsbX, PsbY, PsbZ, Psb30/Ycf12, at least 3 peripheral proteins of the oxygen-evolving complex and a large number of cofactors. It forms dimeric complexes. The D1/D2 heterodimer binds P680, chlorophylls that are the primary electron donor of PSII, and subsequent electron acceptors. It shares a non-heme iron and each subunit binds pheophytin, quinone, additional chlorophylls, carotenoids and lipids. There is also a Cl(-1) ion associated with D1 and D2, which is required for oxygen evolution. The PSII complex binds additional chlorophylls, carotenoids and specific lipids. is required as a cofactor.

Its subcellular location is the plastid. The protein resides in the chloroplast thylakoid membrane. It carries out the reaction 2 a plastoquinone + 4 hnu + 2 H2O = 2 a plastoquinol + O2. Functionally, photosystem II (PSII) is a light-driven water:plastoquinone oxidoreductase that uses light energy to abstract electrons from H(2)O, generating O(2) and a proton gradient subsequently used for ATP formation. It consists of a core antenna complex that captures photons, and an electron transfer chain that converts photonic excitation into a charge separation. The D1/D2 (PsbA/PsbD) reaction center heterodimer binds P680, the primary electron donor of PSII as well as several subsequent electron acceptors. D2 is needed for assembly of a stable PSII complex. The protein is Photosystem II D2 protein of Carica papaya (Papaya).